A 276-amino-acid chain; its full sequence is Digeranylgeranylglyceryl phosphate synthase (276 aa).

The next 5 helical transmembrane spans lie at 14-34, 90-110, 144-164, 200-220, and 221-241; these read VNTL…GGAV, VVLF…AVCI, FVFG…AALA, ALAV…VPYL, and VGVF…VMVV.

The protein belongs to the UbiA prenyltransferase family. DGGGP synthase subfamily. Requires Mg(2+) as cofactor.

Its subcellular location is the cell membrane. It carries out the reaction sn-3-O-(geranylgeranyl)glycerol 1-phosphate + (2E,6E,10E)-geranylgeranyl diphosphate = 2,3-bis-O-(geranylgeranyl)-sn-glycerol 1-phosphate + diphosphate. It participates in membrane lipid metabolism; glycerophospholipid metabolism. In terms of biological role, prenyltransferase that catalyzes the transfer of the geranylgeranyl moiety of geranylgeranyl diphosphate (GGPP) to the C2 hydroxyl of (S)-3-O-geranylgeranylglyceryl phosphate (GGGP). This reaction is the second ether-bond-formation step in the biosynthesis of archaeal membrane lipids. This Halobacterium salinarum (strain ATCC 29341 / DSM 671 / R1) protein is Digeranylgeranylglyceryl phosphate synthase.